Reading from the N-terminus, the 379-residue chain is MRVKDAVELASYAVSEAVSRGRVHPEAAPRERGEFQRDRDRIVHSTAFRRLEYKTQVFVNHEGDLFRTRLTHTIEVAQLTRSLARALGLNEDLAEAIALAHDLGHTPFGHAGQDALHACMKDYGGFEHNLQSLRTVELLEDRYAAFDGLNLLFETREGILKHCSRPNAEKLGELGARFLNGTQPSLEAQLANLADEIAYSNHDVDDGLRSGLITLEQLDSIDVFAEHRRAVQSRWPGLAGRKLISETVRSMVNAMALDLIAQTRANIADAGVRTVDDVRAGPRLVAYSSSLQPRLRALKGFLRENLYWHYQVLRMTDKARRIIGDLFGAFMADPRLLPPQYQEKARTDKPRAIADYIAGMTDRYAMKEHRRLFAVGEIH.

The region spanning 69–200 (RLTHTIEVAQ…ANLADEIAYS (132 aa)) is the HD domain.

The protein belongs to the dGTPase family. Type 2 subfamily.

This chain is Deoxyguanosinetriphosphate triphosphohydrolase-like protein, found in Azoarcus sp. (strain BH72).